The chain runs to 261 residues: Indole-3-glycerol phosphate synthase (261 aa).

It belongs to the TrpC family.

It catalyses the reaction 1-(2-carboxyphenylamino)-1-deoxy-D-ribulose 5-phosphate + H(+) = (1S,2R)-1-C-(indol-3-yl)glycerol 3-phosphate + CO2 + H2O. The protein operates within amino-acid biosynthesis; L-tryptophan biosynthesis; L-tryptophan from chorismate: step 4/5. The protein is Indole-3-glycerol phosphate synthase of Burkholderia multivorans (strain ATCC 17616 / 249).